The primary structure comprises 833 residues: Leucine--tRNA ligase (833 aa).

Residues 41-52 (PYPSGAGLHVGH) carry the 'HIGH' region motif. The short motif at 610–614 (KMSKS) is the 'KMSKS' region element. Lysine 613 provides a ligand contact to ATP.

This sequence belongs to the class-I aminoacyl-tRNA synthetase family.

It localises to the cytoplasm. It carries out the reaction tRNA(Leu) + L-leucine + ATP = L-leucyl-tRNA(Leu) + AMP + diphosphate. The protein is Leucine--tRNA ligase of Streptococcus sanguinis (strain SK36).